A 699-amino-acid polypeptide reads, in one-letter code: Protein STRUBBELIG-RECEPTOR FAMILY 5 (699 aa).

An N-terminal signal peptide occupies residues 1–22 (MTQKLVRLVIVSLAITVTLLQA). The Extracellular portion of the chain corresponds to 23–273 (KTDNQEVSAL…DGGGITAGTG (251 aa)). 5 LRR repeats span residues 93-115 (SLTT…LPPN), 116-136 (IANL…SLSQ), 139-161 (NLQS…FQKL), 163-186 (KLET…ANLT), and 187-209 (SLKK…RNLA). Asparagine 184 carries N-linked (GlcNAc...) asparagine glycosylation. The tract at residues 239–263 (NDWSTETAPPPPPGVKYGRKSSGSK) is disordered. A helical transmembrane segment spans residues 274-294 (MVIAGACLGVLVLIIVLIALV). The Cytoplasmic segment spans residues 295–699 (SKKKSSLSPH…SYRAHDDYDY (405 aa)). Phosphoserine is present on serine 368. A Protein kinase domain is found at 404–675 (FSPGNLLGEG…SEVVEALVRM (272 aa)). ATP contacts are provided by residues 410–418 (LGEGSIGRV) and lysine 432.

Belongs to the protein kinase superfamily. Ser/Thr protein kinase family. Expressed in leaves and flowers.

Its subcellular location is the membrane. In Arabidopsis thaliana (Mouse-ear cress), this protein is Protein STRUBBELIG-RECEPTOR FAMILY 5 (SRF5).